The sequence spans 775 residues: MATFINLEDSPMFQKQVCSLEGTADELKDRCQKLYKGVKKFMGTLGEASKGESAFAACLEEFGGGPDDPISLSIGGPVISKFINALRELASYKEFLCSQVEHVLLERLMNFISVDLQEAKESRHRFDKAAHSYDQSREKFVSLKKNTRGEIVAELEEDLENSKSTFEKSRFNLVNSLMTIEAKKKYEFLESISAIMDAHLRYFKLGYDLLNQLEPFIHQILTYAQQSKEQSKIEQDRLARRIQEFRTQSELDSQQLVANAESSGANGNRVGGNIPYKNTETSLTADKEVIKQGYLLKRSSSLRTDWKRKFFVLDSHGSMYYYRTNGNKSMGSHHHYSGSSDHNTGVFGRFRARHNRSGSLTEGSLGYNTIDLRTSLIKLDAEDMDLRLCFRIISPQKTYTLQAENGADRMDWVNKITKAIGTLLNSHFLQQSPVRYLDKDNSSSAPANAVVSGDQIRHNDSRQNIGDDVSTILRGLPGNNACAECNAPEPDWASLNLGVLLCIQCSGVHRNLGVHISKVRSLSLDVKVWEPTILDLFRNLGNVYCNSLWEGLLHLDDDCEDGSALSHASVSKPCPEDSFSVKEKYILGKYLEKALVIKDESEANLSAASRIWEAVQSRNIREIYRLIVTTGDVNIINTKFDDITDIDAYHHIDAAEKAVKKRHDPTVCQRIKESNEPRSCLQGCSLLHVACHIGDSVLLELLLQFGADLNIRDYHGRTPLHHCISSGNHKFAKILLRRGARPSIEDDGGLSVLERAMEMGAITDEELFLLLAECA.

Residues 2–226 (ATFINLEDSP…IHQILTYAQQ (225 aa)) enclose the BAR domain. In terms of domain architecture, PH spans 288 to 421 (EVIKQGYLLK…WVNKITKAIG (134 aa)). Positions 467 to 603 (DDVSTILRGL…ALVIKDESEA (137 aa)) constitute an Arf-GAP domain. A C4-type zinc finger spans residues 482–505 (CAECNAPEPDWASLNLGVLLCIQC). 2 ANK repeats span residues 682-711 (QGCS…DLNI) and 715-744 (HGRT…RPSI).

As to expression, expressed in roots, hypocotyls, cotyledons, leaf and shoot apical meristems and siliques.

In terms of biological role, probable GTPase-activating protein. The chain is ADP-ribosylation factor GTPase-activating protein AGD4 (AGD4) from Arabidopsis thaliana (Mouse-ear cress).